The following is a 1021-amino-acid chain: Sodium/potassium-transporting ATPase subunit alpha-1 (1021 aa).

A propeptide spanning residues 1–5 is cleaved from the precursor; sequence MGKGV. Residues 1-11 show a composition bias toward basic and acidic residues; it reads MGKGVGRDKYE. Positions 1–37 are disordered; that stretch reads MGKGVGRDKYEPAAVSEHGDKKKAKKERDMDELKKEV. Topologically, residues 6–85 are cytoplasmic; the sequence is GRDKYEPAAV…NALTPPPTTP (80 aa). Residue Lys-9 is modified to N6-acetyllysine. Phosphotyrosine is present on Tyr-10. Ser-16 carries the post-translational modification Phosphoserine; by PKC. At Lys-21 the chain carries N6-acetyllysine. A compositionally biased stretch (basic and acidic residues) spans 26-37; that stretch reads KERDMDELKKEV. Phosphoserine is present on residues Ser-38 and Ser-45. The interval 80-82 is phosphoinositide-3 kinase binding; that stretch reads PPP. A helical membrane pass occupies residues 86–106; it reads EWVKFCRQLFGGFSMLLWIGA. Residues 107–129 lie on the Extracellular side of the membrane; it reads ILCFLAYGIQAATEEEPQNDNLY. Residues 130–150 traverse the membrane as a helical segment; that stretch reads LGVVLSAVVIITGCFSYYQEA. At 151-286 the chain is on the cytoplasmic side; the sequence is KSSKIMESFK…GGQTPIAAEI (136 aa). A disordered region spans residues 214-233; that stretch reads SSLTGESEPQTRSPDFTNEN. Ser-226 is modified (phosphoserine). Residue Tyr-258 is modified to Phosphotyrosine. The helical transmembrane segment at 287-306 threads the bilayer; the sequence is EHFIHIITGVAVFLGVSFFI. Over 307 to 318 the chain is Extracellular; the sequence is LSLILEYTWLEA. The chain crosses the membrane as a helical span at residues 319-336; that stretch reads VIFLIGIIVANVPEGLLA. The Cytoplasmic segment spans residues 337-770; sequence TVTVCLTLTA…EEGRLIFDNL (434 aa). Asp-374 serves as the catalytic 4-aspartylphosphate intermediate. Ser-450 and Ser-482 each carry phosphoserine. ATP is bound at residue Lys-485. Tyr-540 is modified (phosphotyrosine). A mediates interaction with SCN7A region spans residues 594 to 715; sequence RAAVPDAVGK…QGAIVAVTGD (122 aa). Lys-659 carries the N6-succinyllysine modification. Phosphoserine is present on residues Ser-666 and Ser-673. Residues Asp-715 and Asp-719 each coordinate Mg(2+). The helical transmembrane segment at 771–790 threads the bilayer; sequence KKSIAYTLTSNIPEITPFLI. Topologically, residues 791–800 are extracellular; sequence FIIANIPLPL. A helical transmembrane segment spans residues 801 to 821; sequence GTVTILCIDLGTDMVPAISLA. The Cytoplasmic segment spans residues 822–841; that stretch reads YEQAESDIMKRQPRNPKTDK. A helical transmembrane segment spans residues 842–864; that stretch reads LVNEQLISMAYGQIGMIQALGGF. Topologically, residues 865–916 are extracellular; it reads FTYFVILAENGFLPIHLLGLRVNWDDRWINDVEDSYGQQWTYEQRKIVEFTC. A helical transmembrane segment spans residues 917-936; the sequence is HTPFFVTIVVVQWADLVICK. The Cytoplasmic portion of the chain corresponds to 937–949; the sequence is TRRNSVFQQGMKN. At Ser-941 the chain carries Phosphoserine; by PKA. Residues 950–968 traverse the membrane as a helical segment; sequence KILIFGLFEETALAAFLSY. Residues 969 to 983 lie on the Extracellular side of the membrane; the sequence is CPGMGVALRMYPLKP. Residues 984–1004 form a helical membrane-spanning segment; that stretch reads TWWFCAFPYSLLIFVYDEVRK. The Cytoplasmic segment spans residues 1005–1021; the sequence is LIIRRRPGGWVEKETYY.

It belongs to the cation transport ATPase (P-type) (TC 3.A.3) family. Type IIC subfamily. The sodium/potassium-transporting ATPase is composed of a catalytic alpha subunit, an auxiliary non-catalytic beta subunit and an additional regulatory subunit. Interacts with regulatory subunit FXYD1. Interacts with regulatory subunit FXYD3. Interacts with SIK1. Interacts with SLC35G1 and STIM1. Interacts with CLN3; this interaction regulates the sodium/potassium-transporting ATPase complex localization at the plasma membrane. Interacts with SCN7A; activates ATP1A1 P-type sodium:potassium-exchanging transporter activity which indirectly signals to nearby neurons to regulate sodium homeostasis. In terms of processing, phosphorylation on Tyr-10 modulates pumping activity. Phosphorylation of Ser-941 by PKA modulates the response of ATP1A1 to PKC. Dephosphorylation by protein phosphatase 2A (PP2A) following increases in intracellular sodium, leading to increase catalytic activity.

It localises to the cell membrane. The protein localises to the basolateral cell membrane. The protein resides in the sarcolemma. It is found in the cell projection. Its subcellular location is the axon. It localises to the melanosome. It catalyses the reaction K(+)(out) + Na(+)(in) + ATP + H2O = K(+)(in) + Na(+)(out) + ADP + phosphate + H(+). Functionally, this is the catalytic component of the active enzyme, which catalyzes the hydrolysis of ATP coupled with the exchange of sodium and potassium ions across the plasma membrane. This action creates the electrochemical gradient of sodium and potassium ions, providing the energy for active transport of various nutrients. Could also be part of an osmosensory signaling pathway that senses body-fluid sodium levels and controls salt intake behavior as well as voluntary water intake to regulate sodium homeostasis. The sequence is that of Sodium/potassium-transporting ATPase subunit alpha-1 (ATP1A1) from Sus scrofa (Pig).